The chain runs to 148 residues: Large ribosomal subunit protein bL9 (148 aa).

The protein belongs to the bacterial ribosomal protein bL9 family.

In terms of biological role, binds to the 23S rRNA. The sequence is that of Large ribosomal subunit protein bL9 from Geobacter sulfurreducens (strain ATCC 51573 / DSM 12127 / PCA).